The sequence spans 330 residues: DNA-directed RNA polymerase subunit alpha (330 aa).

Residues 1-231 are alpha N-terminal domain (alpha-NTD); that stretch reads MQTNLLKPKT…EQLAVFAQLE (231 aa). The interval 250–330 is alpha C-terminal domain (alpha-CTD); sequence FDPILLRPVD…SWPPAGLDKR (81 aa).

The protein belongs to the RNA polymerase alpha chain family. Homodimer. The RNAP catalytic core consists of 2 alpha, 1 beta, 1 beta' and 1 omega subunit. When a sigma factor is associated with the core the holoenzyme is formed, which can initiate transcription.

It carries out the reaction RNA(n) + a ribonucleoside 5'-triphosphate = RNA(n+1) + diphosphate. DNA-dependent RNA polymerase catalyzes the transcription of DNA into RNA using the four ribonucleoside triphosphates as substrates. This is DNA-directed RNA polymerase subunit alpha from Polaromonas naphthalenivorans (strain CJ2).